Here is a 152-residue protein sequence, read N- to C-terminus: RxLR effector protein Avrblb1 (152 aa).

The first 24 residues, 1–24 (MRSLLLTVLLNLVVLLATTGAVSS), serve as a signal peptide directing secretion. Residues 51–72 (RSLRGDYNNEVTKEPNTSDEER) carry the RxLR-dEER motif. The short motif at 54 to 56 (RGD) is the RGD RLK-binding motif element. Asn-66 carries N-linked (GlcNAc...) asparagine glycosylation. Residues 99 to 152 (QSKTVLRYEDKLFTALYKSGETPRSLRTKHLDKASASVFFNRFKKWYDKNVGPS) form a w motif region.

It belongs to the RxLR effector family. In terms of assembly, interacts with host defense protein RGA2/Rpi-blb1. Interacts with host legume-type lectin receptor kinase LECRK19.

It localises to the secreted. The protein localises to the host nucleus. It is found in the host nucleolus. Its subcellular location is the host cell membrane. Its function is as follows. Secreted effector that acts as an elicitor of hypersensitive response (HR) specifically on plants carrying defense protein RGA2/Rpi-blb1. Enhances P.infestans colonization of plant hosts Nicotiana benthamiana and potato Solanum bulbocastanum leaves. Associates with host legume-type lectin receptor kinases and disrupts attachments between the host plasma membrane and cell wall. The protein is RxLR effector protein Avrblb1 of Phytophthora infestans (strain T30-4) (Potato late blight agent).